We begin with the raw amino-acid sequence, 429 residues long: Putative pentatricopeptide repeat-containing protein At1g03510 (429 aa).

PPR repeat units lie at residues Lys-11–Pro-45, Asp-47–Ser-81, Asn-82–Arg-112, Asn-113–Ser-147, Ser-148–Pro-180, Asn-181–Pro-215, His-216–Arg-246, Asp-247–Pro-281, Asp-282–Asp-312, and Ser-318–Lys-348. The tract at residues Thr-353–Lys-428 is type E motif.

This sequence belongs to the PPR family. PCMP-E subfamily.

In Arabidopsis thaliana (Mouse-ear cress), this protein is Putative pentatricopeptide repeat-containing protein At1g03510 (PCMP-E3).